The following is a 321-amino-acid chain: tRNA dimethylallyltransferase (321 aa).

ATP is bound at residue 25 to 32 (GPTASGKS). Substrate is bound at residue 27-32 (TASGKS). Residues 50–53 (DSMQ) are interaction with substrate tRNA.

The protein belongs to the IPP transferase family. In terms of assembly, monomer. The cofactor is Mg(2+).

The catalysed reaction is adenosine(37) in tRNA + dimethylallyl diphosphate = N(6)-dimethylallyladenosine(37) in tRNA + diphosphate. Functionally, catalyzes the transfer of a dimethylallyl group onto the adenine at position 37 in tRNAs that read codons beginning with uridine, leading to the formation of N6-(dimethylallyl)adenosine (i(6)A). This chain is tRNA dimethylallyltransferase, found in Rhodopseudomonas palustris (strain ATCC BAA-98 / CGA009).